Consider the following 600-residue polypeptide: Aspartate--tRNA(Asp/Asn) ligase (600 aa).

Glutamate 181 contributes to the L-aspartate binding site. The tract at residues 205–208 is aspartate; the sequence is QQYK. Arginine 227 serves as a coordination point for L-aspartate. ATP contacts are provided by residues 227–229 and glutamine 236; that span reads RDE. Histidine 455 serves as a coordination point for L-aspartate. Residue glutamate 490 coordinates ATP. Residue arginine 497 coordinates L-aspartate. Residue 542–545 coordinates ATP; sequence GLDR.

Belongs to the class-II aminoacyl-tRNA synthetase family. Type 1 subfamily. In terms of assembly, homodimer.

The protein resides in the cytoplasm. The enzyme catalyses tRNA(Asx) + L-aspartate + ATP = L-aspartyl-tRNA(Asx) + AMP + diphosphate. In terms of biological role, aspartyl-tRNA synthetase with relaxed tRNA specificity since it is able to aspartylate not only its cognate tRNA(Asp) but also tRNA(Asn). Reaction proceeds in two steps: L-aspartate is first activated by ATP to form Asp-AMP and then transferred to the acceptor end of tRNA(Asp/Asn). In Methylacidiphilum infernorum (isolate V4) (Methylokorus infernorum (strain V4)), this protein is Aspartate--tRNA(Asp/Asn) ligase.